The chain runs to 206 residues: Putative NAD(P)H nitroreductase MhqN (206 aa).

FMN is bound by residues 11-13 (RRS), 68-70 (QYK), 157-158 (IG), Arg-193, and Arg-196.

The protein belongs to the nitroreductase family. As to quaternary structure, homodimer. The cofactor is FMN.

The protein resides in the cytoplasm. Functionally, putative nitroreductase that may contribute to the degradation of aromatic compounds. This Bacillus subtilis (strain 168) protein is Putative NAD(P)H nitroreductase MhqN (mhqN).